The chain runs to 109 residues: Cell division protein ZapA (109 aa).

A coiled-coil region spans residues 71-99; that stretch reads KTRDYASNMEQRIRMLQQTIEQALLEQGR.

This sequence belongs to the ZapA family. Type 1 subfamily. As to quaternary structure, homodimer. Interacts with FtsZ.

The protein resides in the cytoplasm. Activator of cell division through the inhibition of FtsZ GTPase activity, therefore promoting FtsZ assembly into bundles of protofilaments necessary for the formation of the division Z ring. It is recruited early at mid-cell but it is not essential for cell division. This is Cell division protein ZapA from Serratia proteamaculans (strain 568).